The following is a 460-amino-acid chain: RING finger protein DG17 (460 aa).

The segment at 27–67 (CPICFEFIYKKQIYQCKSGHHACKECWEKSLETKKECMTCK) adopts an RING-type zinc-finger fold. 2 consecutive TRAF-type zinc fingers follow at residues 141 to 194 (SHLI…KKEL) and 196 to 253 (THYK…SELQ). A coiled-coil region spans residues 269–294 (IEKLTNQVGQSKKTHDELLKKIEDLS). The region spanning 320–448 (GYRNKWIISN…DDKLIIEIYI (129 aa)) is the MATH domain.

This sequence belongs to the TNF receptor-associated factor family. A subfamily.

The protein resides in the cytoplasm. In terms of biological role, probable adapter protein and signal transducer that links members of the tumor necrosis factor receptor family to different signaling pathways by association with the receptor cytoplasmic domain and kinases. The chain is RING finger protein DG17 (zfaA) from Dictyostelium discoideum (Social amoeba).